A 215-amino-acid chain; its full sequence is MSEHETAGEGRFNSIEIRVLGSLIEKQATSPESYPLTLNALVLACNQKTSREPVMNLTQGQVGQALRALEGQDLTRLQMGSRADRWEQRVDKALELVPAQLVLMGLMFLRGPQTLNELLTRSNRLHDFDDTEQIQHQLERLISRDLALHLPRQAGQREDRYTHALGDPAEIEAILAARQQEGGARSSGASVSEERIEALEARIAALEARLAELEG.

The protein belongs to the UPF0502 family.

In Pseudomonas putida (strain GB-1), this protein is UPF0502 protein PputGB1_3531.